Consider the following 301-residue polypeptide: Porphobilinogen deaminase (301 aa).

Cys-242 carries the S-(dipyrrolylmethanemethyl)cysteine modification.

It belongs to the HMBS family. In terms of assembly, monomer. It depends on dipyrromethane as a cofactor.

The enzyme catalyses 4 porphobilinogen + H2O = hydroxymethylbilane + 4 NH4(+). It participates in porphyrin-containing compound metabolism; protoporphyrin-IX biosynthesis; coproporphyrinogen-III from 5-aminolevulinate: step 2/4. In terms of biological role, tetrapolymerization of the monopyrrole PBG into the hydroxymethylbilane pre-uroporphyrinogen in several discrete steps. This is Porphobilinogen deaminase from Rickettsia canadensis (strain McKiel).